The following is a 1150-amino-acid chain: ATP-dependent helicase/deoxyribonuclease subunit B (1150 aa).

8 to 15 (GRAGSGKS) is a binding site for ATP. [4Fe-4S] cluster contacts are provided by Cys-786, Cys-1106, Cys-1109, and Cys-1115.

It belongs to the helicase family. AddB/RexB type 1 subfamily. As to quaternary structure, heterodimer of AddA and AddB. Mg(2+) is required as a cofactor. Requires [4Fe-4S] cluster as cofactor.

Functionally, the heterodimer acts as both an ATP-dependent DNA helicase and an ATP-dependent, dual-direction single-stranded exonuclease. Recognizes the chi site generating a DNA molecule suitable for the initiation of homologous recombination. The AddB subunit has 5' -&gt; 3' nuclease activity but not helicase activity. The protein is ATP-dependent helicase/deoxyribonuclease subunit B of Clostridium botulinum (strain Langeland / NCTC 10281 / Type F).